A 605-amino-acid chain; its full sequence is Class II receptor tyrosine kinase (605 aa).

Positions 1 to 67 constitute an Ig-like C2-type domain; it reads MWSSPGRNLE…DGESASFRVD (67 aa). Residues 1-84 are Extracellular-facing; sequence MWSSPGRNLE…GSNSGVIAGV (84 aa). N-linked (GlcNAc...) asparagine glycans are attached at residues asparagine 26, asparagine 44, and asparagine 72. A helical membrane pass occupies residues 85 to 105; the sequence is LITLLLLIALIIILICVFWVV. At 106–605 the chain is on the cytoplasmic side; that stretch reads WRYRRRGKFD…GRPRGVAGCV (500 aa). Residues 209–230 are disordered; it reads EELSPIQEKPTRRNTGLSTYSQ. Over residues 221–230 the composition is skewed to polar residues; that stretch reads RNTGLSTYSQ. In terms of domain architecture, Protein kinase spans 346–605; that stretch reads IREVKQIGVG…GRPRGVAGCV (260 aa). ATP contacts are provided by residues 352 to 360 and lysine 393; that span reads IGVGQFGAV. Aspartate 496 (proton acceptor) is an active-site residue. Tyrosine 527 carries the phosphotyrosine; by autocatalysis modification.

This sequence belongs to the protein kinase superfamily. Tyr protein kinase family. Insulin receptor subfamily. In terms of processing, phosphorylated.

It localises to the cell membrane. It carries out the reaction L-tyrosyl-[protein] + ATP = O-phospho-L-tyrosyl-[protein] + ADP + H(+). In Geodia cydonium (Sponge), this protein is Class II receptor tyrosine kinase (TK).